We begin with the raw amino-acid sequence, 272 residues long: Ribonuclease HII (272 aa).

In terms of domain architecture, RNase H type-2 spans 30-221 (GPVAGVDEVG…VRRAAEATGV (192 aa)). Positions 36, 37, and 130 each coordinate a divalent metal cation.

The protein belongs to the RNase HII family. Mn(2+) is required as a cofactor. Requires Mg(2+) as cofactor.

The protein resides in the cytoplasm. It carries out the reaction Endonucleolytic cleavage to 5'-phosphomonoester.. Endonuclease that specifically degrades the RNA of RNA-DNA hybrids. This Mycolicibacterium smegmatis (strain ATCC 700084 / mc(2)155) (Mycobacterium smegmatis) protein is Ribonuclease HII.